We begin with the raw amino-acid sequence, 383 residues long: 23S rRNA (uracil(747)-C(5))-methyltransferase RlmC (383 aa).

Residues cysteine 3, cysteine 11, cysteine 14, and cysteine 89 each coordinate [4Fe-4S] cluster. S-adenosyl-L-methionine-binding residues include glutamine 214, phenylalanine 243, glutamate 270, and asparagine 315. Cysteine 342 (nucleophile) is an active-site residue.

The protein belongs to the class I-like SAM-binding methyltransferase superfamily. RNA M5U methyltransferase family. RlmC subfamily.

The enzyme catalyses uridine(747) in 23S rRNA + S-adenosyl-L-methionine = 5-methyluridine(747) in 23S rRNA + S-adenosyl-L-homocysteine + H(+). Catalyzes the formation of 5-methyl-uridine at position 747 (m5U747) in 23S rRNA. The protein is 23S rRNA (uracil(747)-C(5))-methyltransferase RlmC of Actinobacillus succinogenes (strain ATCC 55618 / DSM 22257 / CCUG 43843 / 130Z).